The sequence spans 194 residues: FAD-linked sulfhydryl oxidase ERV1 (194 aa).

The disordered stretch occupies residues 44 to 72 (LSLSLSPPPTPPSPPPPPPEVLKKDSKAA). The segment covering 49–63 (SPPPTPPSPPPPPPE) has biased composition (pro residues). One can recognise an ERV/ALR sulfhydryl oxidase domain in the interval 72-172 (APLTKEEVGR…FPCQRVNARW (101 aa)). Residues Lys76, Arg81, Trp84, Glu121, His125, Cys148, His151, Asn152, Asn155, Lys160, and Arg171 each coordinate FAD. A disulfide bridge connects residues Cys119 and Cys122. Cys148 and Cys165 are joined by a disulfide. An intrachain disulfide couples Cys177 to Cys182. A Required for dimerization and substrate specificity motif is present at residues 177-182 (CPERSC).

In terms of assembly, homodimer. FAD is required as a cofactor. Contains three disulfide bonds; one catalytic disulfide (Cys-119 to Cys-122), one structural disulfide (Cys-148 to Cys-165), and one shuttle disulfide (Cys-177 to Cys-182).

The protein localises to the mitochondrion. It carries out the reaction 2 R'C(R)SH + O2 = R'C(R)S-S(R)CR' + H2O2. FAD-dependent sulfhydryl oxidase that catalyzes disulfide bond formation. Oxidizes thioredoxin in vitro. Required for the import and folding of small cysteine-containing proteins in the mitochondrial intermembrane space, and can act independently of the oxidoreductase MIA40. Can oxidize the cytochrome c oxidase assembly protein COX19, a typical substrate of MIA40. The polypeptide is FAD-linked sulfhydryl oxidase ERV1 (Oryza sativa subsp. japonica (Rice)).